Here is a 90-residue protein sequence, read N- to C-terminus: Small ribosomal subunit protein uS17 (90 aa).

This sequence belongs to the universal ribosomal protein uS17 family. Part of the 30S ribosomal subunit.

Functionally, one of the primary rRNA binding proteins, it binds specifically to the 5'-end of 16S ribosomal RNA. The protein is Small ribosomal subunit protein uS17 of Paraburkholderia phymatum (strain DSM 17167 / CIP 108236 / LMG 21445 / STM815) (Burkholderia phymatum).